The sequence spans 443 residues: L-ornithine N(5)-monooxygenase (443 aa).

Residues 45 to 53 and Gln64 contribute to the FAD site; that span reads DKQGDYRWH. Lys69 provides a ligand contact to substrate. FAD is bound at residue Val130. NADP(+) is bound by residues 215-218 and Arg240; that span reads GGQS. Substrate-binding positions include 254–257 and Asn284; that span reads NEVF. 284-286 lines the NADP(+) pocket; that stretch reads NYS. An FAD-binding site is contributed by 407–409; the sequence is TLL. Ser410 contributes to the substrate binding site.

The protein belongs to the lysine N(6)-hydroxylase/L-ornithine N(5)-oxygenase family. As to quaternary structure, homotetramer. FAD is required as a cofactor.

The protein resides in the cell inner membrane. It catalyses the reaction L-ornithine + NADPH + O2 = N(5)-hydroxy-L-ornithine + NADP(+) + H2O. It functions in the pathway siderophore biosynthesis; pyoverdin biosynthesis. In terms of biological role, catalyzes the conversion of L-ornithine to N(5)-hydroxyornithine, the first step in the biosynthesis of all hydroxamate-containing siderophores, such as pyoverdin. Pyoverdin is a hydroxamate siderophore composed of a 6,7-dihydroxyquinoline-containing fluorescent chromophore joined to the N-terminus of a partly cyclic octapeptide (D-Ser-L-Arg-D-Ser-L-N(5)-OH-Orn-L-Lys-L-N(5)-OH-Orn-L-Thr-L-Thr in strain PAO1). Specific for NADPH, which plays a role in stabilization of the C4a-hydroperoxyflavin intermediate. This is L-ornithine N(5)-monooxygenase from Pseudomonas aeruginosa (strain ATCC 15692 / DSM 22644 / CIP 104116 / JCM 14847 / LMG 12228 / 1C / PRS 101 / PAO1).